Here is a 265-residue protein sequence, read N- to C-terminus: Proline-rich protein 23B (265 aa).

Low complexity predominate over residues 1-18 (MVSRPRSPSAFPAPWWGQ). Disordered stretches follow at residues 1 to 49 (MVSR…EDPA) and 226 to 265 (PSSPLQPLPPSPCVGSPGPHARSPLPERPPCKARRRLFQA). Positions 226-237 (PSSPLQPLPPSP) are enriched in pro residues. Residues 256-265 (CKARRRLFQA) are compositionally biased toward basic residues.

This sequence belongs to the PRR23 family.

This is Proline-rich protein 23B (PRR23B) from Homo sapiens (Human).